Here is a 426-residue protein sequence, read N- to C-terminus: 26S proteasome regulatory subunit 7B (426 aa).

ATP is bound at residue 209–216 (GPPGTGKT).

This sequence belongs to the AAA ATPase family.

It is found in the cytoplasm. The protein resides in the nucleus. In terms of biological role, the 26S proteasome is involved in the ATP-dependent degradation of ubiquitinated proteins. The regulatory (or ATPase) complex confers ATP dependency and substrate specificity to the 26S complex. The sequence is that of 26S proteasome regulatory subunit 7B (RPT1B) from Oryza sativa subsp. japonica (Rice).